The primary structure comprises 459 residues: Disease resistance protein CHL1 (459 aa).

The 155-residue stretch at 16-170 (REVDVFLSFC…QIARDISLVV (155 aa)) folds into the TIR domain. Glu89 is an active-site residue. Residues 191-401 (VYDLLALEVN…LLKLKAKQGG (211 aa)) form the NB-ARC domain. Residues 429–440 (ERKESSQDKSQQ) show a composition bias toward basic and acidic residues. The interval 429-459 (ERKESSQDKSQQESEVAADILIGKESSQDKQ) is disordered.

In terms of tissue distribution, mostly expressed in leaves, stems and roots, and, to a lower extent, in flowers and siliques.

It localises to the cytoplasm. It carries out the reaction NAD(+) + H2O = ADP-D-ribose + nicotinamide + H(+). In terms of biological role, confers resistance to low temperatures by limiting chloroplast damage and cell death, thus maintaining growth homeostasis. This is Disease resistance protein CHL1 from Arabidopsis thaliana (Mouse-ear cress).